A 280-amino-acid polypeptide reads, in one-letter code: Large ribosomal subunit protein uL2 (280 aa).

2 disordered regions span residues 27-59 (STPE…GGHK) and 225-280 (VMNP…KHSR). Basic residues-rich tracts occupy residues 37 to 59 (LHGR…GGHK) and 268 to 280 (IVRR…KHSR).

Belongs to the universal ribosomal protein uL2 family. Part of the 50S ribosomal subunit. Forms a bridge to the 30S subunit in the 70S ribosome.

Its function is as follows. One of the primary rRNA binding proteins. Required for association of the 30S and 50S subunits to form the 70S ribosome, for tRNA binding and peptide bond formation. It has been suggested to have peptidyltransferase activity; this is somewhat controversial. Makes several contacts with the 16S rRNA in the 70S ribosome. This is Large ribosomal subunit protein uL2 from Mycobacterium bovis (strain ATCC BAA-935 / AF2122/97).